Reading from the N-terminus, the 243-residue chain is L-fucose operon activator (243 aa).

An HTH deoR-type domain is found at 1 to 57 (MKAARQQAIVDLLLNHTSLTTEALSEQLKVSKETIRRDLNELQTQGKILRNHGRAKY). The segment at residues 19–38 (LTTEALSEQLKVSKETIRRD) is a DNA-binding region (H-T-H motif).

Functionally, transcriptional activator of the fuc operon. The protein is L-fucose operon activator (fucR) of Escherichia coli (strain K12).